The primary structure comprises 510 residues: ATP synthase subunit alpha 1 (510 aa).

167–174 (GDRATGKT) is a binding site for ATP.

The protein belongs to the ATPase alpha/beta chains family. F-type ATPases have 2 components, CF(1) - the catalytic core - and CF(0) - the membrane proton channel. CF(1) has five subunits: alpha(3), beta(3), gamma(1), delta(1), epsilon(1). CF(0) has three main subunits: a(1), b(2) and c(9-12). The alpha and beta chains form an alternating ring which encloses part of the gamma chain. CF(1) is attached to CF(0) by a central stalk formed by the gamma and epsilon chains, while a peripheral stalk is formed by the delta and b chains.

It is found in the cell inner membrane. The catalysed reaction is ATP + H2O + 4 H(+)(in) = ADP + phosphate + 5 H(+)(out). In terms of biological role, produces ATP from ADP in the presence of a proton gradient across the membrane. The alpha chain is a regulatory subunit. This is ATP synthase subunit alpha 1 from Paraburkholderia xenovorans (strain LB400).